A 90-amino-acid chain; its full sequence is Small ribosomal subunit protein bS20 (90 aa).

Belongs to the bacterial ribosomal protein bS20 family.

Its function is as follows. Binds directly to 16S ribosomal RNA. The polypeptide is Small ribosomal subunit protein bS20 (Desulfitobacterium hafniense (strain DSM 10664 / DCB-2)).